We begin with the raw amino-acid sequence, 147 residues long: Large ribosomal subunit protein uL15 (147 aa).

The tract at residues 1–45 (MRLEDLRPTPGAMKKRKRVGRGPGSGHGKTSGRGHKGQKARGSGK) is disordered. Residues 30–44 (TSGRGHKGQKARGSG) show a composition bias toward basic residues.

It belongs to the universal ribosomal protein uL15 family. Part of the 50S ribosomal subunit.

Its function is as follows. Binds to the 23S rRNA. This is Large ribosomal subunit protein uL15 from Thermotoga sp. (strain RQ2).